Reading from the N-terminus, the 441-residue chain is GTPase Der (441 aa).

EngA-type G domains lie at 4 to 169 and 178 to 353; these read SIVA…PPEA and PRIA…QNRN. GTP-binding positions include 10 to 17, 57 to 61, 120 to 123, 184 to 191, 231 to 235, and 296 to 299; these read GRPNVGKS, DTGGI, NKVD, GKPNVGKS, DTAGL, and NKWD. The 85-residue stretch at 354 to 438 folds into the KH-like domain; sequence LRISTGVLNE…SLKFFIRERK (85 aa).

This sequence belongs to the TRAFAC class TrmE-Era-EngA-EngB-Septin-like GTPase superfamily. EngA (Der) GTPase family. As to quaternary structure, associates with the 50S ribosomal subunit.

GTPase that plays an essential role in the late steps of ribosome biogenesis. The sequence is that of GTPase Der from Lachnoclostridium phytofermentans (strain ATCC 700394 / DSM 18823 / ISDg) (Clostridium phytofermentans).